Reading from the N-terminus, the 414-residue chain is Methanesulfonate monooxygenase hydroxylase subunit alpha (414 aa).

The 120-residue stretch at 44-163 (WVPFRHESEL…CEVKFGGFVW (120 aa)) folds into the Rieske domain. Positions 86, 88, 115, and 118 each coordinate [2Fe-2S] cluster. A Fe cation-binding site is contributed by histidine 225.

It belongs to the bacterial ring-hydroxylating dioxygenase alpha subunit family. As to quaternary structure, the MSA monooxygenase system consists of 4 proteins: the 2 subunits of the hydroxylase component (MsmA and MsmB), a ferredoxin (MsmC) and a ferredoxin reductase (MsmD). The hydroxylase component consists of a 3 alpha (MsmA) and 3 beta (MsmB) subunits. [2Fe-2S] cluster serves as cofactor. Fe cation is required as a cofactor.

The protein localises to the cytoplasm. It carries out the reaction methanesulfonate + NADH + O2 = sulfite + formaldehyde + NAD(+) + H2O. MSAMO is inhibited by metal chelators (such as bathophenanthroline, bathocuprione, neocuprione, alpha-alpha-dipyridil and sodium EDTA) and by sodium azide, sodium arsenate and potassium cyanide. Functionally, methanesulfonate monooxygenase (MSAMO) mediates the primary degradation of methanesulfonic acid (MSA) to produce formaldehyd and inorganic sulfite by initial hydroxylation of the carbon atom prior to spontaneous cleavage of the unstable hydroxymethanesulfonic acid. MSAMO has a restricted substrate range that includes only the short-chain aliphatic sulfonates (methane- to butanesulfonate) and excludes all larger molecules, such as arylsulfonates and aromatic sulfonates. All MSAMO components are required for enzyme activity. The chain is Methanesulfonate monooxygenase hydroxylase subunit alpha from Methylosulfonomonas methylovora.